Consider the following 323-residue polypeptide: o-succinylbenzoate synthase (323 aa).

The active-site Proton donor is the Lys-134. The Mg(2+) site is built by Asp-162, Glu-191, and Asp-214. Catalysis depends on Lys-236, which acts as the Proton acceptor.

This sequence belongs to the mandelate racemase/muconate lactonizing enzyme family. MenC type 1 subfamily. A divalent metal cation is required as a cofactor.

It carries out the reaction (1R,6R)-6-hydroxy-2-succinyl-cyclohexa-2,4-diene-1-carboxylate = 2-succinylbenzoate + H2O. The protein operates within quinol/quinone metabolism; 1,4-dihydroxy-2-naphthoate biosynthesis; 1,4-dihydroxy-2-naphthoate from chorismate: step 4/7. It participates in quinol/quinone metabolism; menaquinone biosynthesis. Converts 2-succinyl-6-hydroxy-2,4-cyclohexadiene-1-carboxylate (SHCHC) to 2-succinylbenzoate (OSB). This is o-succinylbenzoate synthase from Photorhabdus laumondii subsp. laumondii (strain DSM 15139 / CIP 105565 / TT01) (Photorhabdus luminescens subsp. laumondii).